Consider the following 192-residue polypeptide: Anthrone oxygenase (192 aa).

3 helical membrane passes run Ile12 to Val32, Gly54 to Ala74, and Ala86 to Ser106. N-linked (GlcNAc...) asparagine glycans are attached at residues Asn130, Asn138, and Asn147. Residues Met172–Val192 form a helical membrane-spanning segment.

The protein belongs to the anthrone oxygenase family.

It is found in the membrane. It catalyses the reaction emodin anthrone + O2 = emodin + H2O + H(+). The protein operates within secondary metabolite biosynthesis. Anthrone oxygenase; part of the gene cluster that mediates the biosynthesis of monodictyphenone, a prenyl xanthone derivative. The pathway begins with the synthesis of atrochrysone thioester by the polyketide synthase (PKS) mdpG. The atrochrysone carboxyl ACP thioesterase mdpF then breaks the thioester bond and releases the atrochrysone carboxylic acid from mdpG. The atrochrysone carboxylic acid is then converted to atrochrysone which is further transformed into emodin anthrone by mdpH-1 and mdpH-2. Emodin is further modified to yield monodictyphenone via several steps involving mdpB, mdpC mdpJ, mdpK and mdpL. These enzymes with xptA, xptB and xptC are also proposed to be involved in the synthesis of shamixanthone from emodin. Especially, direct reduction of emodin by the short chain dehydrogenase mdpC followed by dehydration catalyzed by the scytalone dehydratase-like protein mdpB gives loss of oxygen and formation of chrysophanol intermediate in two simple steps. The sequence is that of Anthrone oxygenase from Emericella nidulans (strain FGSC A4 / ATCC 38163 / CBS 112.46 / NRRL 194 / M139) (Aspergillus nidulans).